A 419-amino-acid chain; its full sequence is UDP-N-acetylglucosamine 1-carboxyvinyltransferase (419 aa).

Phosphoenolpyruvate is bound at residue 22–23; sequence KN. Arg91 contributes to the UDP-N-acetyl-alpha-D-glucosamine binding site. Cys115 (proton donor) is an active-site residue. Position 115 is a 2-(S-cysteinyl)pyruvic acid O-phosphothioketal (Cys115). UDP-N-acetyl-alpha-D-glucosamine contacts are provided by residues 120–124, 160–163, Asp305, and Val327; these read RPVDL and KVSV.

It belongs to the EPSP synthase family. MurA subfamily.

The protein localises to the cytoplasm. It catalyses the reaction phosphoenolpyruvate + UDP-N-acetyl-alpha-D-glucosamine = UDP-N-acetyl-3-O-(1-carboxyvinyl)-alpha-D-glucosamine + phosphate. Its pathway is cell wall biogenesis; peptidoglycan biosynthesis. Its function is as follows. Cell wall formation. Adds enolpyruvyl to UDP-N-acetylglucosamine. The protein is UDP-N-acetylglucosamine 1-carboxyvinyltransferase of Escherichia coli (strain K12 / MC4100 / BW2952).